The following is a 679-amino-acid chain: Protein CASP (679 aa).

Over 1–614 (MDTSVYSHAL…VILQNKMTRM (614 aa)) the chain is Cytoplasmic. 2 coiled-coil regions span residues 14–90 (AKAD…EKVL) and 178–341 (RNWK…NYSD). The residue at position 364 (serine 364) is a Phosphoserine. Positions 385-444 (ANKKLQATLAEYRSKSTAQEEERNELKKSVDQLKQQIATLKEANEKLETDLEKVENVSPH) form a coiled coil. Serine 450 and serine 453 each carry phosphoserine. Residues 492–540 (IVTKQRDRFRSRNMDLEKQLRQGNSEKGKLKLEISKLKGDNTKLYERIR) adopt a coiled-coil conformation. Serine 555 carries the post-translational modification Phosphoserine. Residues 615-635 (VFLFYCIGLHGLVFMMSMYVI) form a helical; Anchor for type IV membrane protein membrane-spanning segment. Residues 636–679 (NISGYMTPEVGIVQSAKSSSNLNGGLGGAEKVAAGVGSVHGINR) lie on the Lumenal side of the membrane.

It belongs to the CASP family.

The protein localises to the golgi apparatus membrane. May be involved in intra-Golgi transport. This chain is Protein CASP (COY1), found in Saccharomyces cerevisiae (strain ATCC 204508 / S288c) (Baker's yeast).